A 387-amino-acid polypeptide reads, in one-letter code: Acyl-CoA dehydrogenase FadE29 (387 aa).

FAD is bound by residues 123–126 (IGYT), T132, and T158. E241 serves as the catalytic Proton acceptor. An FAD-binding site is contributed by 367 to 369 (VNE).

The protein belongs to the acyl-CoA dehydrogenase family. As to quaternary structure, heterotetramer composed of FadE28 and FadE29. Requires FAD as cofactor.

The enzyme catalyses 3-oxochol-4-en-22-oyl-CoA + A = 3-oxochola-4,17-dien-22-oyl-CoA + AH2. It participates in steroid metabolism; cholesterol degradation. Its function is as follows. Involved in the third cycle of side chain dehydrogenation in the beta-oxidation of cholesterol catabolism. Contributes partly to the virulence by increasing the efficiency of beta-oxidation. Catalyzes the dehydrogenation of 2'-propanoyl-CoA ester side chains of 3-oxo-4-pregnene-20-carboxyl-CoA (3-OPC-CoA) to yield 3-oxo-4,17-pregnadiene-20-carboxyl-CoA (3-OPDC-CoA). Also able to dehydrogenate steroyl-CoA such as 3-oxo-chol-4-en-24-oyl-CoA (3-OCO-CoA), 1beta-(2'-propanoyl-CoA)-3a-alpha-H- 7a-beta-methylhexahydro-4-indanone (indanone-CoA ester), hexahydroindanone and pregenenone. This is Acyl-CoA dehydrogenase FadE29 (fadE29) from Mycobacterium tuberculosis (strain ATCC 25618 / H37Rv).